We begin with the raw amino-acid sequence, 599 residues long: Elongation factor 4 (599 aa).

The tr-type G domain maps to 5-187 (SHIRNFSIIA…RLVQSIPAPE (183 aa)). GTP-binding positions include 17–22 (DHGKST) and 134–137 (NKMD).

Belongs to the TRAFAC class translation factor GTPase superfamily. Classic translation factor GTPase family. LepA subfamily.

The protein localises to the cell inner membrane. It catalyses the reaction GTP + H2O = GDP + phosphate + H(+). Its function is as follows. Required for accurate and efficient protein synthesis under certain stress conditions. May act as a fidelity factor of the translation reaction, by catalyzing a one-codon backward translocation of tRNAs on improperly translocated ribosomes. Back-translocation proceeds from a post-translocation (POST) complex to a pre-translocation (PRE) complex, thus giving elongation factor G a second chance to translocate the tRNAs correctly. Binds to ribosomes in a GTP-dependent manner. The chain is Elongation factor 4 from Pseudomonas entomophila (strain L48).